Reading from the N-terminus, the 216-residue chain is Ethylene-inducing xylanase (216 aa).

Residues 1–19 form the signal peptide; the sequence is MVSFSSLFVAACAAVTAFA. The 189-residue stretch at 28 to 216 folds into the GH11 domain; the sequence is AITTSQQGTS…SSGSSDITVS (189 aa). Glu-112 functions as the Nucleophile in the catalytic mechanism. The active-site Proton donor is the Glu-203.

The protein belongs to the glycosyl hydrolase 11 (cellulase G) family.

Its subcellular location is the secreted. It carries out the reaction Endohydrolysis of (1-&gt;4)-beta-D-xylosidic linkages in xylans.. The protein operates within glycan degradation; xylan degradation. Its function is as follows. Endo-1,4-beta-xylanase involved in the hydrolysis of xylan, a major structural heterogeneous polysaccharide found in plant biomass representing the second most abundant polysaccharide in the biosphere, after cellulose. Acts as a pathogen-associated molecular pattern (PAMP) that can trigger plant cell death. Triggers a series of immune responses in citrus fruit and enhanced the resistance of citrus and other fruit against fungal pathogens. This chain is Ethylene-inducing xylanase, found in Penicillium digitatum (strain Pd1 / CECT 20795) (Green mold).